We begin with the raw amino-acid sequence, 1406 residues long: MSEIQGTVEFSVELHKFYNVDLFQRGYYQIRVTLKVSSRIPHRLSASIAGQTESSSLHSACVHDSTVHSRVFQILYRNEEVPINDAVVFRVHLLLGGERMEDALSEVDFQLKVDLHFTDSEQQLRDVAGAPMVSSRTLGLHFHPRNGLHHQVPVMFDYFHLSVISVTVHAALVALQQPLISFTRPGRGSWLGKGGPDTGQEQSIISLENLVFGAGYCKPTSSEGSFYITSENCMQHAHKWHRDLCLLLLHAYRGLRLHFLVIMRDIPELPHTELEALAVEETLSQLCSELQMLNNPEKIAEQISKDLAWLTSHMMTLWTQFLDTVTLHSQVTTYLTQEHHTLRVRRFSEAFFYMEHQKLAVLTFQENLIQTHSQLSLDIRNSEYLTSMPPLPAECLDIDGDWNTLPVIFEDRYVDCPATGHNLSVYPNFDVPVTSPTIMNLKDKEDNCMVNSNLSFREDLVLSTIKPSQMDSDEEVIRCPEPGENVATQNHMDMCSESQVYISIGEFQNKAGVPEDECWTGQTSDAGTYPVADVDTSRRSPGPEDGQAPVLTYIDVKSSNKNPSRAEPLVAFNAQHESRSSRDKYGLDRTGLSKVVVGGSHQNAISSDKTTLHELSTLGKGIDQEGKMVLLSLKLTPSEPCDPLSSTLREPLDIRSSLKDSHTEEQEELSVLSGVIKRSSSIISDSGIESEPSSVAWSEARSRALELPSDREVLHPFVRRHALHRNSLEGGHTESNTSLPSGIQASLTSISSLPFEEDEREVALTKLTKSVSAPHISSPEEAAEDADTKQQDGGFAEPSDMHSKSQGSPGSCSQLCGDSGTDAGADHPLVEIVLDADNQQGPGYIDIPKGKGKQFDAQGHCLPDGRTENTPGVETKGLNLKIPRVIALENPRTRSLHRALEETPKGMPKDLNVGQQALSNSGISEVEGLSQHQVPELSCTSAADAINRNSTGQQSQSGSPCIMDDTAFNRGVNAFPEAKHKAGTVCPTVTHSVHSQVLKNQELKAGTSIMGSHLTSAETFTLDSLKAVEVVNLSVSCTATCLPFSSVPKETPARAGFSSKQTLFPITHQPLGSFGVVSTHSSTLDEEVSERMFSFYQAKEKFKKELKIEGFLYSDLTVLASDIPYFPPEEEEENLEDGIHLVVCVHGLDGNSADLRLVKTFIELGLPGGKLDFLMSEKNQMDTFADFDTMTDRLLDEIIQHIQLYNLSISRISFIGHSLGNIIIRSVLTRPRFRYYLNKLHTFLSLSGPHLGTLYNNSTLVSTGLWLMQKLKKSGSLLQLTFRDNADLRKCFLYQLSQKTGLQYFKNVVLVASPQDRYVPFHSARIEMCKTALKDRHTGPVYAEMINNLLGPLVEAKDCTLIRHNVFHALPNTANTLIGRAAHIAVLDSELFLEKFFLVAGLNYFK.

Disordered regions lie at residues 519-548 and 770-820; these read WTGQ…DGQA and SVSA…GDSG. Phosphoserine is present on residues serine 777 and serine 778. Residues 804–816 are compositionally biased toward polar residues; sequence KSQGSPGSCSQLC.

The protein belongs to the FAM135 family.

This is Protein FAM135B (FAM135B) from Homo sapiens (Human).